We begin with the raw amino-acid sequence, 333 residues long: Lipoyl synthase (333 aa).

The segment at 1–29 (MTDSASGASAVANIATPSNEPYDATRKQK) is disordered. The [4Fe-4S] cluster site is built by C80, C85, C91, C106, C110, C113, and S320. The 219-residue stretch at 91 to 309 (CFGKGTATFM…EEKAYEMGFT (219 aa)) folds into the Radical SAM core domain.

Belongs to the radical SAM superfamily. Lipoyl synthase family. [4Fe-4S] cluster is required as a cofactor.

The protein localises to the cytoplasm. The catalysed reaction is [[Fe-S] cluster scaffold protein carrying a second [4Fe-4S](2+) cluster] + N(6)-octanoyl-L-lysyl-[protein] + 2 oxidized [2Fe-2S]-[ferredoxin] + 2 S-adenosyl-L-methionine + 4 H(+) = [[Fe-S] cluster scaffold protein] + N(6)-[(R)-dihydrolipoyl]-L-lysyl-[protein] + 4 Fe(3+) + 2 hydrogen sulfide + 2 5'-deoxyadenosine + 2 L-methionine + 2 reduced [2Fe-2S]-[ferredoxin]. The protein operates within protein modification; protein lipoylation via endogenous pathway; protein N(6)-(lipoyl)lysine from octanoyl-[acyl-carrier-protein]: step 2/2. Functionally, catalyzes the radical-mediated insertion of two sulfur atoms into the C-6 and C-8 positions of the octanoyl moiety bound to the lipoyl domains of lipoate-dependent enzymes, thereby converting the octanoylated domains into lipoylated derivatives. This is Lipoyl synthase from Ralstonia nicotianae (strain ATCC BAA-1114 / GMI1000) (Ralstonia solanacearum).